A 345-amino-acid chain; its full sequence is Trans-enoyl reductase tndF (345 aa).

Residues 1–26 (MAREHQAAILPQPGGPLSVGMRPTPK) are disordered. Residues 44 to 49 (CDYYQR), 168 to 171 (SSSV), 191 to 194 (SPEH), Tyr209, and 244 to 245 (LD) contribute to the NADP(+) site.

It belongs to the zinc-containing alcohol dehydrogenase family.

Its pathway is secondary metabolite biosynthesis; terpenoid biosynthesis. In terms of biological role, trans-enoyl reductase; part of the gene cluster that mediates the biosynthesis of talaronoid C, a fusicoccane diterpenoid with an unprecedented tricyclic 5/8/6 ring system. The first step in the pathway is performed by the fusicoccadiene synthase tndC that possesses both prenyl transferase and terpene cyclase activity, converting isopentenyl diphosphate and dimethylallyl diphosphate into geranylgeranyl diphosphate (GGDP) and further converting GGDP into talarodiene, a precursor for talaronoid C. The remaining enzymes from the cluster include the cytochrome P450 monooxygenase tndB, the aldehyde reductase tndE and the alcohol dehydrogenase tndF that are involved in the conversion of talarodiene into talaronoid C. The protein is Trans-enoyl reductase tndF of Aspergillus flavipes.